A 68-amino-acid polypeptide reads, in one-letter code: Large ribosomal subunit protein bL31 (68 aa).

Zn(2+) is bound by residues Cys17, Cys19, Cys37, and Cys40.

Belongs to the bacterial ribosomal protein bL31 family. Type A subfamily. In terms of assembly, part of the 50S ribosomal subunit. It depends on Zn(2+) as a cofactor.

In terms of biological role, binds the 23S rRNA. This Dehalococcoides mccartyi (strain CBDB1) protein is Large ribosomal subunit protein bL31.